The primary structure comprises 212 residues: MYYLFKDLFFPPVSEADEEGVLAIGGDLDPERLKLAYKSGIFPWFNEGEPILWWAPDPRMVLFFDELVISKSMRKILNKKIFKVTYNKNFKEVISNCQQIKREGQNGTWISNEMIEAYCELHKQGIAKSVEVWQDEVLVGGLYGIDLGHVFCGESMFSKVSNASKTAFIALALYLKKENYKLLDCQVYNSHLESLGCREIDREEFMSILKSK.

This sequence belongs to the L/F-transferase family.

Its subcellular location is the cytoplasm. It catalyses the reaction N-terminal L-lysyl-[protein] + L-leucyl-tRNA(Leu) = N-terminal L-leucyl-L-lysyl-[protein] + tRNA(Leu) + H(+). It carries out the reaction N-terminal L-arginyl-[protein] + L-leucyl-tRNA(Leu) = N-terminal L-leucyl-L-arginyl-[protein] + tRNA(Leu) + H(+). The enzyme catalyses L-phenylalanyl-tRNA(Phe) + an N-terminal L-alpha-aminoacyl-[protein] = an N-terminal L-phenylalanyl-L-alpha-aminoacyl-[protein] + tRNA(Phe). Functions in the N-end rule pathway of protein degradation where it conjugates Leu, Phe and, less efficiently, Met from aminoacyl-tRNAs to the N-termini of proteins containing an N-terminal arginine or lysine. The polypeptide is Leucyl/phenylalanyl-tRNA--protein transferase (Flavobacterium johnsoniae (strain ATCC 17061 / DSM 2064 / JCM 8514 / BCRC 14874 / CCUG 350202 / NBRC 14942 / NCIMB 11054 / UW101) (Cytophaga johnsonae)).